The sequence spans 352 residues: Isoflavone-7-O-methyltransferase 9 (352 aa).

118-127 (VLDPTLSGSY) provides a ligand contact to substrate. S-adenosyl-L-methionine contacts are provided by G196, D219, D239, M240, and K253. The active-site Proton acceptor is H257.

Belongs to the class I-like SAM-binding methyltransferase superfamily. Cation-independent O-methyltransferase family. COMT subfamily. In terms of assembly, homodimer.

It catalyses the reaction a 7-hydroxyisoflavone + S-adenosyl-L-methionine = a 7-methoxyisoflavone + S-adenosyl-L-homocysteine + H(+). It functions in the pathway phytoalexin biosynthesis; medicarpin biosynthesis. Its function is as follows. Transfers a methyl group to 7-hydroxyls of the isoflavones daidzein, genistein and 6,7,4'-trihydroxyisoflavone. Can also methylate (+)6a-hydroxymaackiain with lower efficiency. The polypeptide is Isoflavone-7-O-methyltransferase 9 (Medicago sativa (Alfalfa)).